The following is a 267-amino-acid chain: Sulfur carrier protein FdhD (267 aa).

The active-site Cysteine persulfide intermediate is Cys-108.

This sequence belongs to the FdhD family.

The protein localises to the cytoplasm. Its function is as follows. Required for formate dehydrogenase (FDH) activity. Acts as a sulfur carrier protein that transfers sulfur from IscS to the molybdenum cofactor prior to its insertion into FDH. The sequence is that of Sulfur carrier protein FdhD from Shouchella clausii (strain KSM-K16) (Alkalihalobacillus clausii).